Here is a 266-residue protein sequence, read N- to C-terminus: Regulatory protein RecX (266 aa).

The protein belongs to the RecX family.

Its subcellular location is the cytoplasm. Its function is as follows. Modulates RecA activity. This is Regulatory protein RecX from Levilactobacillus brevis (strain ATCC 367 / BCRC 12310 / CIP 105137 / JCM 1170 / LMG 11437 / NCIMB 947 / NCTC 947) (Lactobacillus brevis).